Here is a 52-residue protein sequence, read N- to C-terminus: UPF0391 membrane protein Avin_10980 (52 aa).

Transmembrane regions (helical) follow at residues 4-24 and 29-49; these read WSII…GGIA and GIAK…LLFG.

It belongs to the UPF0391 family.

Its subcellular location is the cell membrane. The chain is UPF0391 membrane protein Avin_10980 from Azotobacter vinelandii (strain DJ / ATCC BAA-1303).